The chain runs to 327 residues: Aspartate--ammonia ligase (327 aa).

Belongs to the class-II aminoacyl-tRNA synthetase family. AsnA subfamily.

Its subcellular location is the cytoplasm. It catalyses the reaction L-aspartate + NH4(+) + ATP = L-asparagine + AMP + diphosphate + H(+). Its pathway is amino-acid biosynthesis; L-asparagine biosynthesis; L-asparagine from L-aspartate (ammonia route): step 1/1. In Bacillus anthracis (strain A0248), this protein is Aspartate--ammonia ligase.